Here is a 763-residue protein sequence, read N- to C-terminus: Eukaryotic translation initiation factor 3 subunit B (763 aa).

The interval 1 to 136 (MKNFLPRTLK…LFVECGSMND (136 aa)) is sufficient for interaction with HCR1 and TIF32. Residues 28-261 (RNTQLKRSKI…GVTAWGGPNF (234 aa)) are sufficient for interaction with PIC8. At serine 61 the chain carries Phosphoserine. Tyrosine 67 carries the phosphotyrosine modification. An RRM domain is found at 77–162 (QYIVVNGAPV…HRLFLYTMKD (86 aa)). 6 WD repeats span residues 228–266 (RENW…RLRR), 277–325 (VSPN…LMAT), 373–416 (LKPS…SACT), 484–524 (ELKD…IRFY), 544–589 (IPKT…EKNI), and 605–650 (PTYS…VKED). Phosphoserine is present on serine 669.

This sequence belongs to the eIF-3 subunit B family. In terms of assembly, the eukaryotic translation initiation factor 3 (eIF-3) core complex is composed of TIF32, PRT1, NIP1, TIF34 and TIF35. A subcomplex of TIF32, NIP1 and PRT1 mediates the interaction with eIF-1, TIF5/eIF-5 and HCR1. The factors eIF-1, eIF-2, eIF-3, TIF5/eIF-5 and methionyl-tRNAi form a multifactor complex (MFC) that may bind to the 40S ribosome.

Its subcellular location is the cytoplasm. In terms of biological role, RNA-binding component of the eukaryotic translation initiation factor 3 (eIF-3) complex, which is involved in protein synthesis of a specialized repertoire of mRNAs and, together with other initiation factors, stimulates binding of mRNA and methionyl-tRNAi to the 40S ribosome. The eIF-3 complex specifically targets and initiates translation of a subset of mRNAs involved in cell proliferation. The protein is Eukaryotic translation initiation factor 3 subunit B of Saccharomyces cerevisiae (strain ATCC 204508 / S288c) (Baker's yeast).